Reading from the N-terminus, the 261-residue chain is Ribosomal RNA small subunit methyltransferase A (261 aa).

S-adenosyl-L-methionine contacts are provided by N20, L22, G47, E68, D90, and N110.

It belongs to the class I-like SAM-binding methyltransferase superfamily. rRNA adenine N(6)-methyltransferase family. RsmA subfamily.

It localises to the cytoplasm. It catalyses the reaction adenosine(1518)/adenosine(1519) in 16S rRNA + 4 S-adenosyl-L-methionine = N(6)-dimethyladenosine(1518)/N(6)-dimethyladenosine(1519) in 16S rRNA + 4 S-adenosyl-L-homocysteine + 4 H(+). Specifically dimethylates two adjacent adenosines (A1518 and A1519) in the loop of a conserved hairpin near the 3'-end of 16S rRNA in the 30S particle. May play a critical role in biogenesis of 30S subunits. The protein is Ribosomal RNA small subunit methyltransferase A of Prosthecochloris aestuarii (strain DSM 271 / SK 413).